A 329-amino-acid polypeptide reads, in one-letter code: Ketol-acid reductoisomerase (NADP(+)) (329 aa).

Residues 2 to 181 (MKKYYESDAD…GATRAVVLET (180 aa)) enclose the KARI N-terminal Rossmann domain. NADP(+) contacts are provided by residues 25 to 28 (YGSQ), Arg48, Ser52, and 82 to 85 (DELQ). The active site involves His107. Residue Gly133 participates in NADP(+) binding. One can recognise a KARI C-terminal knotted domain in the interval 182–327 (TFREETETDL…KEVRAMMPQF (146 aa)). Residues Asp190, Glu194, Glu226, and Glu230 each contribute to the Mg(2+) site. Ser251 is a binding site for substrate.

Belongs to the ketol-acid reductoisomerase family. Mg(2+) serves as cofactor.

It carries out the reaction (2R)-2,3-dihydroxy-3-methylbutanoate + NADP(+) = (2S)-2-acetolactate + NADPH + H(+). The enzyme catalyses (2R,3R)-2,3-dihydroxy-3-methylpentanoate + NADP(+) = (S)-2-ethyl-2-hydroxy-3-oxobutanoate + NADPH + H(+). Its pathway is amino-acid biosynthesis; L-isoleucine biosynthesis; L-isoleucine from 2-oxobutanoate: step 2/4. The protein operates within amino-acid biosynthesis; L-valine biosynthesis; L-valine from pyruvate: step 2/4. Its function is as follows. Involved in the biosynthesis of branched-chain amino acids (BCAA). Catalyzes an alkyl-migration followed by a ketol-acid reduction of (S)-2-acetolactate (S2AL) to yield (R)-2,3-dihydroxy-isovalerate. In the isomerase reaction, S2AL is rearranged via a Mg-dependent methyl migration to produce 3-hydroxy-3-methyl-2-ketobutyrate (HMKB). In the reductase reaction, this 2-ketoacid undergoes a metal-dependent reduction by NADPH to yield (R)-2,3-dihydroxy-isovalerate. This Methanoregula boonei (strain DSM 21154 / JCM 14090 / 6A8) protein is Ketol-acid reductoisomerase (NADP(+)).